The sequence spans 380 residues: Beta sliding clamp (380 aa).

Belongs to the beta sliding clamp family. Forms a ring-shaped head-to-tail homodimer around DNA which binds and tethers DNA polymerases and other proteins to the DNA. The DNA replisome complex has a single clamp-loading complex (3 tau and 1 each of delta, delta', psi and chi subunits) which binds 3 Pol III cores (1 core on the leading strand and 2 on the lagging strand) each with a beta sliding clamp dimer. Additional proteins in the replisome are other copies of gamma, psi and chi, Ssb, DNA helicase and RNA primase.

It localises to the cytoplasm. Confers DNA tethering and processivity to DNA polymerases and other proteins. Acts as a clamp, forming a ring around DNA (a reaction catalyzed by the clamp-loading complex) which diffuses in an ATP-independent manner freely and bidirectionally along dsDNA. Initially characterized for its ability to contact the catalytic subunit of DNA polymerase III (Pol III), a complex, multichain enzyme responsible for most of the replicative synthesis in bacteria; Pol III exhibits 3'-5' exonuclease proofreading activity. The beta chain is required for initiation of replication as well as for processivity of DNA replication. This Halalkalibacterium halodurans (strain ATCC BAA-125 / DSM 18197 / FERM 7344 / JCM 9153 / C-125) (Bacillus halodurans) protein is Beta sliding clamp (dnaN).